We begin with the raw amino-acid sequence, 22 residues long: Mu-conotoxin CnIIIA (22 aa).

3 disulfides stabilise this stretch: cysteine 3-cysteine 15, cysteine 4-cysteine 21, and cysteine 10-cysteine 22. Cysteine 22 is subject to Cysteine amide.

The protein belongs to the conotoxin M superfamily. In terms of tissue distribution, expressed by the venom duct. Has not been isolated from the crude venom.

It localises to the secreted. Its function is as follows. Mu-conotoxins block voltage-gated sodium channels (Nav). This synthetic toxin moderately blocks rNav1.1/SCN1A, rNav1.2/SCN2A, rNav1.3/SCN3A, rNav1.4/SCN4A, rNav1.5/SCN5A, and mNav1.6/SCN8A. This block is very slowly reversible. Causes seizures when injected intracranially into mice. This Conus consors (Singed cone) protein is Mu-conotoxin CnIIIA.